Here is an 88-residue protein sequence, read N- to C-terminus: MSEQIDRYVSFKNIDCNARAGQMMDALQPYIQAAENPFWAYFQQKRAEFNAKGYDDLRVLHNYLPTLKELIEDDELLAQLEDLEYTCM.

It belongs to the CowN family.

Functionally, is required to sustain N(2)-dependent growth in the presence of low levels of carbon monoxide (CO). Probably acts by protecting the N(2) fixation ability of the nitrogenase complex, which is inactivated in the presence of CO. In Rhodomicrobium vannielii (strain ATCC 17100 / DSM 162 / LMG 4299 / NCIMB 10020 / ATH 3.1.1), this protein is N(2)-fixation sustaining protein CowN.